A 438-amino-acid polypeptide reads, in one-letter code: ATP-dependent protease ATPase subunit HslU (438 aa).

ATP is bound by residues Val18, 60 to 65 (GVGKTE), Asp252, Glu317, and Arg389.

Belongs to the ClpX chaperone family. HslU subfamily. As to quaternary structure, a double ring-shaped homohexamer of HslV is capped on each side by a ring-shaped HslU homohexamer. The assembly of the HslU/HslV complex is dependent on binding of ATP.

The protein localises to the cytoplasm. In terms of biological role, ATPase subunit of a proteasome-like degradation complex; this subunit has chaperone activity. The binding of ATP and its subsequent hydrolysis by HslU are essential for unfolding of protein substrates subsequently hydrolyzed by HslV. HslU recognizes the N-terminal part of its protein substrates and unfolds these before they are guided to HslV for hydrolysis. The sequence is that of ATP-dependent protease ATPase subunit HslU from Saccharophagus degradans (strain 2-40 / ATCC 43961 / DSM 17024).